Reading from the N-terminus, the 50-residue chain is Large ribosomal subunit protein bL33B (50 aa).

The protein belongs to the bacterial ribosomal protein bL33 family.

This Streptococcus pyogenes serotype M1 protein is Large ribosomal subunit protein bL33B.